Here is a 423-residue protein sequence, read N- to C-terminus: UDP-N-acetylglucosamine 1-carboxyvinyltransferase 2 (423 aa).

23–24 contributes to the phosphoenolpyruvate binding site; it reads KN. R93 contacts UDP-N-acetyl-alpha-D-glucosamine. The Proton donor role is filled by C117. Position 117 is a 2-(S-cysteinyl)pyruvic acid O-phosphothioketal (C117). UDP-N-acetyl-alpha-D-glucosamine contacts are provided by residues 122–126, D305, and I327; that span reads RPIDQ.

The protein belongs to the EPSP synthase family. MurA subfamily.

Its subcellular location is the cytoplasm. The catalysed reaction is phosphoenolpyruvate + UDP-N-acetyl-alpha-D-glucosamine = UDP-N-acetyl-3-O-(1-carboxyvinyl)-alpha-D-glucosamine + phosphate. Its pathway is cell wall biogenesis; peptidoglycan biosynthesis. In terms of biological role, cell wall formation. Adds enolpyruvyl to UDP-N-acetylglucosamine. The protein is UDP-N-acetylglucosamine 1-carboxyvinyltransferase 2 of Listeria monocytogenes serovar 1/2a (strain ATCC BAA-679 / EGD-e).